A 108-amino-acid chain; its full sequence is Protein phosphatase 1 regulatory subunit 1C (108 aa).

The disordered stretch occupies residues 25-108 (AEQIRKRRPT…ASEREEKWNH (84 aa)). The segment covering 45–54 (NSPEIDEKRV) has biased composition (basic and acidic residues). Over residues 55–73 (TNTQESQNASPKQRKQSVY) the composition is skewed to polar residues. Positions 99 to 108 (ASEREEKWNH) are enriched in basic and acidic residues.

The protein belongs to the protein phosphatase inhibitor 1 family.

Its subcellular location is the cytoplasm. In terms of biological role, may increase cell susceptibility to TNF-induced apoptosis. The protein is Protein phosphatase 1 regulatory subunit 1C (Ppp1r1c) of Mus musculus (Mouse).